The following is a 210-amino-acid chain: Ribosomal RNA large subunit methyltransferase E (210 aa).

Gly-64, Trp-66, Asp-84, Asp-100, and Asp-125 together coordinate S-adenosyl-L-methionine. Catalysis depends on Lys-165, which acts as the Proton acceptor.

The protein belongs to the class I-like SAM-binding methyltransferase superfamily. RNA methyltransferase RlmE family.

It is found in the cytoplasm. It catalyses the reaction uridine(2552) in 23S rRNA + S-adenosyl-L-methionine = 2'-O-methyluridine(2552) in 23S rRNA + S-adenosyl-L-homocysteine + H(+). Its function is as follows. Specifically methylates the uridine in position 2552 of 23S rRNA at the 2'-O position of the ribose in the fully assembled 50S ribosomal subunit. The chain is Ribosomal RNA large subunit methyltransferase E from Chromohalobacter salexigens (strain ATCC BAA-138 / DSM 3043 / CIP 106854 / NCIMB 13768 / 1H11).